The following is a 437-amino-acid chain: tRNA(Ile2) 2-agmatinylcytidine synthetase TiaS (437 aa).

This sequence belongs to the TiaS family.

The protein resides in the cytoplasm. It carries out the reaction cytidine(34) in tRNA(Ile2) + agmatine + ATP + H2O = 2-agmatinylcytidine(34) in tRNA(Ile2) + AMP + 2 phosphate + 2 H(+). ATP-dependent agmatine transferase that catalyzes the formation of 2-agmatinylcytidine (agm2C) at the wobble position (C34) of tRNA(Ile2), converting the codon specificity from AUG to AUA. This Acidilobus saccharovorans (strain DSM 16705 / JCM 18335 / VKM B-2471 / 345-15) protein is tRNA(Ile2) 2-agmatinylcytidine synthetase TiaS.